The following is a 505-amino-acid chain: tRNA-2-methylthio-N(6)-dimethylallyladenosine synthase (505 aa).

An MTTase N-terminal domain is found at 14 to 132 (RTYEVRTYGC…LPVLLERARV (119 aa)). Residues cysteine 23, cysteine 61, cysteine 95, cysteine 169, cysteine 173, and cysteine 176 each contribute to the [4Fe-4S] cluster site. The 232-residue stretch at 155-386 (RESAYAAWVS…ALQEEISWEE (232 aa)) folds into the Radical SAM core domain. Residues 388 to 456 (KKQVGRTLEL…PHHLLAEGPV (69 aa)) enclose the TRAM domain.

The protein belongs to the methylthiotransferase family. MiaB subfamily. Monomer. Requires [4Fe-4S] cluster as cofactor.

The protein localises to the cytoplasm. It catalyses the reaction N(6)-dimethylallyladenosine(37) in tRNA + (sulfur carrier)-SH + AH2 + 2 S-adenosyl-L-methionine = 2-methylsulfanyl-N(6)-dimethylallyladenosine(37) in tRNA + (sulfur carrier)-H + 5'-deoxyadenosine + L-methionine + A + S-adenosyl-L-homocysteine + 2 H(+). In terms of biological role, catalyzes the methylthiolation of N6-(dimethylallyl)adenosine (i(6)A), leading to the formation of 2-methylthio-N6-(dimethylallyl)adenosine (ms(2)i(6)A) at position 37 in tRNAs that read codons beginning with uridine. The sequence is that of tRNA-2-methylthio-N(6)-dimethylallyladenosine synthase from Streptomyces viridosporus (strain ATCC 14672 / DSM 40746 / JCM 4963 / KCTC 9882 / NRRL B-12104 / FH 1290) (Streptomyces ghanaensis).